Consider the following 377-residue polypeptide: Geranylgeranyl transferase type-1 subunit beta (377 aa).

PFTB repeat units lie at residues Lys-144–Asn-186, Met-193–Gly-234, Leu-245–Lys-284, and Phe-291–Glu-333. Geranylgeranyl diphosphate-binding positions include His-219 to Gly-221 and Arg-263 to Lys-266. Zn(2+) is bound by residues Asp-269 and Cys-271. Tyr-272 to Trp-275 contributes to the geranylgeranyl diphosphate binding site. Residue His-321 coordinates Zn(2+).

The protein belongs to the protein prenyltransferase subunit beta family. Heterodimer of FNTA and PGGT1B. PGGT1B mediates interaction with substrate peptides. Requires Zn(2+) as cofactor. The cofactor is Mg(2+).

The enzyme catalyses geranylgeranyl diphosphate + L-cysteinyl-[protein] = S-geranylgeranyl-L-cysteinyl-[protein] + diphosphate. Functionally, catalyzes the transfer of a geranylgeranyl moiety from geranylgeranyl diphosphate to a cysteine at the fourth position from the C-terminus of proteins with the C-terminal sequence Cys-aliphatic-aliphatic-X. Known substrates include RAC1, RAC2, RAP1A and RAP1B. The protein is Geranylgeranyl transferase type-1 subunit beta (Pggt1b) of Rattus norvegicus (Rat).